The primary structure comprises 141 residues: ATP synthase epsilon chain (141 aa).

This sequence belongs to the ATPase epsilon chain family. In terms of assembly, F-type ATPases have 2 components, CF(1) - the catalytic core - and CF(0) - the membrane proton channel. CF(1) has five subunits: alpha(3), beta(3), gamma(1), delta(1), epsilon(1). CF(0) has three main subunits: a, b and c.

It is found in the cell inner membrane. Functionally, produces ATP from ADP in the presence of a proton gradient across the membrane. The chain is ATP synthase epsilon chain from Desulfatibacillum aliphaticivorans.